Reading from the N-terminus, the 211-residue chain is Imidazole glycerol phosphate synthase subunit HisH (211 aa).

The region spanning 4–211 (TVALLDYGSG…QLLRNWINHI (208 aa)) is the Glutamine amidotransferase type-1 domain. C82 serves as the catalytic Nucleophile. Residues H192 and E194 contribute to the active site.

As to quaternary structure, heterodimer of HisH and HisF.

The protein resides in the cytoplasm. It carries out the reaction 5-[(5-phospho-1-deoxy-D-ribulos-1-ylimino)methylamino]-1-(5-phospho-beta-D-ribosyl)imidazole-4-carboxamide + L-glutamine = D-erythro-1-(imidazol-4-yl)glycerol 3-phosphate + 5-amino-1-(5-phospho-beta-D-ribosyl)imidazole-4-carboxamide + L-glutamate + H(+). The catalysed reaction is L-glutamine + H2O = L-glutamate + NH4(+). It functions in the pathway amino-acid biosynthesis; L-histidine biosynthesis; L-histidine from 5-phospho-alpha-D-ribose 1-diphosphate: step 5/9. Functionally, IGPS catalyzes the conversion of PRFAR and glutamine to IGP, AICAR and glutamate. The HisH subunit catalyzes the hydrolysis of glutamine to glutamate and ammonia as part of the synthesis of IGP and AICAR. The resulting ammonia molecule is channeled to the active site of HisF. The protein is Imidazole glycerol phosphate synthase subunit HisH of Corynebacterium efficiens (strain DSM 44549 / YS-314 / AJ 12310 / JCM 11189 / NBRC 100395).